Consider the following 125-residue polypeptide: Phosphoribosyl-AMP cyclohydrolase (125 aa).

A Mg(2+)-binding site is contributed by D91. C92 is a Zn(2+) binding site. Mg(2+)-binding residues include D93 and D95. Residues C108 and C115 each coordinate Zn(2+).

The protein belongs to the PRA-CH family. Homodimer. Mg(2+) is required as a cofactor. Zn(2+) serves as cofactor.

The protein resides in the cytoplasm. The enzyme catalyses 1-(5-phospho-beta-D-ribosyl)-5'-AMP + H2O = 1-(5-phospho-beta-D-ribosyl)-5-[(5-phospho-beta-D-ribosylamino)methylideneamino]imidazole-4-carboxamide. The protein operates within amino-acid biosynthesis; L-histidine biosynthesis; L-histidine from 5-phospho-alpha-D-ribose 1-diphosphate: step 3/9. Its function is as follows. Catalyzes the hydrolysis of the adenine ring of phosphoribosyl-AMP. The sequence is that of Phosphoribosyl-AMP cyclohydrolase from Streptomyces griseus subsp. griseus (strain JCM 4626 / CBS 651.72 / NBRC 13350 / KCC S-0626 / ISP 5235).